The primary structure comprises 621 residues: uncharacterized protein (621 aa).

This sequence belongs to the chlamydial CPn_0512/CT_425/TC_0708 family.

This is an uncharacterized protein from Chlamydia muridarum (strain MoPn / Nigg).